A 1368-amino-acid polypeptide reads, in one-letter code: DNA-directed RNA polymerase subunit beta (1368 aa).

It belongs to the RNA polymerase beta chain family. The RNAP catalytic core consists of 2 alpha, 1 beta, 1 beta' and 1 omega subunit. When a sigma factor is associated with the core the holoenzyme is formed, which can initiate transcription.

The catalysed reaction is RNA(n) + a ribonucleoside 5'-triphosphate = RNA(n+1) + diphosphate. In terms of biological role, DNA-dependent RNA polymerase catalyzes the transcription of DNA into RNA using the four ribonucleoside triphosphates as substrates. The chain is DNA-directed RNA polymerase subunit beta from Ralstonia nicotianae (strain ATCC BAA-1114 / GMI1000) (Ralstonia solanacearum).